The following is a 1609-amino-acid chain: Laminin subunit gamma-1 (1609 aa).

The N-terminal stretch at 1 to 33 (MRGSHRAAPALRPRGRLWPVLAVLAAAAAAGCA) is a signal peptide. The 240-residue stretch at 46–285 (RPQRCMPEFV…AISDFAVGGR (240 aa)) folds into the Laminin N-terminal domain. N-linked (GlcNAc...) asparagine glycosylation is found at asparagine 60 and asparagine 134. 16 disulfides stabilise this stretch: cysteine 286-cysteine 295, cysteine 288-cysteine 305, cysteine 307-cysteine 316, cysteine 319-cysteine 339, cysteine 342-cysteine 351, cysteine 344-cysteine 367, cysteine 370-cysteine 379, cysteine 382-cysteine 395, cysteine 398-cysteine 410, cysteine 400-cysteine 416, cysteine 418-cysteine 427, cysteine 430-cysteine 442, cysteine 445-cysteine 456, cysteine 447-cysteine 463, cysteine 465-cysteine 474, and cysteine 477-cysteine 492. 4 consecutive Laminin EGF-like domains span residues 286-341 (CKCN…ECLP), 342-397 (CDCN…ACSS), 398-444 (CHCS…GCRP), and 445-494 (CSCD…GCTP). The 10-residue stretch at 495–504 (CFCFGHSSVC) folds into the Laminin EGF-like 5; first part domain. One can recognise a Laminin IV type A domain in the interval 514-689 (SISSTFQIDE…PGVPATWVES (176 aa)). N-linked (GlcNAc...) asparagine glycans are attached at residues asparagine 576 and asparagine 650. Residues 690-723 (CTCPVGYGGQFCEMCLSGYRRETPNLGPYSPCVL) form the Laminin EGF-like 5; second part domain. Disulfide bonds link cysteine 724/cysteine 733, cysteine 726/cysteine 740, cysteine 742/cysteine 751, cysteine 754/cysteine 770, cysteine 773/cysteine 781, cysteine 775/cysteine 792, cysteine 795/cysteine 804, cysteine 807/cysteine 825, cysteine 828/cysteine 842, cysteine 830/cysteine 849, cysteine 852/cysteine 861, cysteine 864/cysteine 881, cysteine 884/cysteine 898, cysteine 886/cysteine 905, cysteine 907/cysteine 916, cysteine 919/cysteine 932, cysteine 935/cysteine 947, cysteine 937/cysteine 954, cysteine 956/cysteine 965, cysteine 968/cysteine 980, cysteine 983/cysteine 995, cysteine 985/cysteine 1001, cysteine 1003/cysteine 1012, and cysteine 1015/cysteine 1028. 6 Laminin EGF-like domains span residues 724 to 772 (CACN…DCQP), 773 to 827 (CPCP…LCRL), 828 to 883 (CQCS…KCKA), 884 to 934 (CNCN…GCER), 935 to 982 (CDCH…GCKP), and 983 to 1030 (CDCH…GCQE). 2 N-linked (GlcNAc...) asparagine glycosylation sites follow: asparagine 1022 and asparagine 1107. A domain II and I region spans residues 1030–1609 (ECPACYRLVK…CFNTPSIEKP (580 aa)). The stretch at 1038–1609 (VKDKVADHRV…CFNTPSIEKP (572 aa)) forms a coiled coil. Position 1149 is a phosphoserine; by FAM20C (serine 1149). N-linked (GlcNAc...) asparagine glycans are attached at residues asparagine 1161, asparagine 1175, asparagine 1205, asparagine 1223, asparagine 1241, asparagine 1380, asparagine 1395, and asparagine 1439. Residue serine 1493 is modified to Phosphoserine.

In terms of assembly, laminin is a complex glycoprotein, consisting of three different polypeptide chains (alpha, beta, gamma), which are bound to each other by disulfide bonds into a cross-shaped molecule comprising one long and three short arms with globules at each end. Gamma-1 is a subunit of laminin-1 (laminin-111 or EHS laminin), laminin-2 (laminin-211 or merosin), laminin-3 (laminin-121 or S-laminin), laminin-4 (laminin-221 or S-merosin), laminin-6 (laminin-311 or K-laminin), laminin-7 (laminin-321 or KS-laminin), laminin-8 (laminin-411), laminin-9 (laminin-421), laminin-10 (laminin-511) and laminin-11 (laminin-521). Interacts with SVEP1. In terms of tissue distribution, found in the basement membranes (major component).

It localises to the secreted. The protein resides in the extracellular space. The protein localises to the extracellular matrix. It is found in the basement membrane. Functionally, binding to cells via a high affinity receptor, laminin is thought to mediate the attachment, migration and organization of cells into tissues during embryonic development by interacting with other extracellular matrix components. The protein is Laminin subunit gamma-1 of Homo sapiens (Human).